A 47-amino-acid polypeptide reads, in one-letter code: Large ribosomal subunit protein bL34 (47 aa).

Belongs to the bacterial ribosomal protein bL34 family.

In Mycobacteroides abscessus (strain ATCC 19977 / DSM 44196 / CCUG 20993 / CIP 104536 / JCM 13569 / NCTC 13031 / TMC 1543 / L948) (Mycobacterium abscessus), this protein is Large ribosomal subunit protein bL34.